We begin with the raw amino-acid sequence, 287 residues long: Phosphatidylserine decarboxylase proenzyme (287 aa).

Active-site charge relay system; for autoendoproteolytic cleavage activity residues include D90, H147, and S252. Residue S252 is the Schiff-base intermediate with substrate; via pyruvic acid; for decarboxylase activity of the active site. S252 is modified (pyruvic acid (Ser); by autocatalysis).

It belongs to the phosphatidylserine decarboxylase family. PSD-B subfamily. Prokaryotic type I sub-subfamily. In terms of assembly, heterodimer of a large membrane-associated beta subunit and a small pyruvoyl-containing alpha subunit. Pyruvate is required as a cofactor. Post-translationally, is synthesized initially as an inactive proenzyme. Formation of the active enzyme involves a self-maturation process in which the active site pyruvoyl group is generated from an internal serine residue via an autocatalytic post-translational modification. Two non-identical subunits are generated from the proenzyme in this reaction, and the pyruvate is formed at the N-terminus of the alpha chain, which is derived from the carboxyl end of the proenzyme. The autoendoproteolytic cleavage occurs by a canonical serine protease mechanism, in which the side chain hydroxyl group of the serine supplies its oxygen atom to form the C-terminus of the beta chain, while the remainder of the serine residue undergoes an oxidative deamination to produce ammonia and the pyruvoyl prosthetic group on the alpha chain. During this reaction, the Ser that is part of the protease active site of the proenzyme becomes the pyruvoyl prosthetic group, which constitutes an essential element of the active site of the mature decarboxylase.

It localises to the cell membrane. The catalysed reaction is a 1,2-diacyl-sn-glycero-3-phospho-L-serine + H(+) = a 1,2-diacyl-sn-glycero-3-phosphoethanolamine + CO2. The protein operates within phospholipid metabolism; phosphatidylethanolamine biosynthesis; phosphatidylethanolamine from CDP-diacylglycerol: step 2/2. In terms of biological role, catalyzes the formation of phosphatidylethanolamine (PtdEtn) from phosphatidylserine (PtdSer). This Pseudomonas putida (strain ATCC 700007 / DSM 6899 / JCM 31910 / BCRC 17059 / LMG 24140 / F1) protein is Phosphatidylserine decarboxylase proenzyme.